We begin with the raw amino-acid sequence, 118 residues long: Large ribosomal subunit protein bL20 (118 aa).

Belongs to the bacterial ribosomal protein bL20 family.

Functionally, binds directly to 23S ribosomal RNA and is necessary for the in vitro assembly process of the 50S ribosomal subunit. It is not involved in the protein synthesizing functions of that subunit. The polypeptide is Large ribosomal subunit protein bL20 (Francisella tularensis subsp. tularensis (strain FSC 198)).